The sequence spans 1451 residues: ABC transporter G family member 32 (1451 aa).

The region spanning 162–435 (GNALHISPTR…FELMGFRCPQ (274 aa)) is the ABC transporter 1 domain. 195 to 202 (GPPGSGKT) contributes to the ATP binding site. Positions 513–725 (ALLKANIDRE…AQNAISTNEF (213 aa)) constitute an ABC transmembrane type-2 1 domain. The next 6 helical transmembrane spans lie at 531–551 (FVYI…MTTF), 563–583 (GTIY…NGFA), 618–638 (IPVT…VVGF), 650–670 (LLLV…AGIG), 674–694 (VVSQ…GGFI), and 760–780 (IGFG…TVAL). Residues 809–835 (ILDSCEEKKSRKKEQSQSVNQKHWNNT) form a disordered region. Residues 813-823 (CEEKKSRKKEQ) show a composition bias toward basic and acidic residues. Residues 853–1105 (LSFNDIKYSV…KLIEYFEGIE (253 aa)) enclose the ABC transporter 2 domain. 898–905 (GVSGAGKT) serves as a coordination point for ATP. The region spanning 1178–1392 (TQCIACLWKH…TLYGLVASQF (215 aa)) is the ABC transmembrane type-2 2 domain. The next 7 membrane-spanning stretches (helical) occupy residues 1197–1217 (YTAV…TMFW), 1237–1257 (YAAV…VVVV), 1285–1305 (LPYI…MIGF), 1312–1332 (FIWY…FGMM), 1342–1362 (IAAI…GYLI), 1373–1393 (WYCW…SQFG), and 1423–1443 (LVAV…SFAI).

Belongs to the ABC transporter superfamily. ABCG family. PDR (TC 3.A.1.205) subfamily.

It is found in the membrane. Its function is as follows. May be a general defense protein. In Oryza sativa subsp. japonica (Rice), this protein is ABC transporter G family member 32.